The primary structure comprises 267 residues: Tryptophan synthase alpha chain (267 aa).

Residues Glu-43 and Asp-54 each act as proton acceptor in the active site.

Belongs to the TrpA family. In terms of assembly, tetramer of two alpha and two beta chains.

It catalyses the reaction (1S,2R)-1-C-(indol-3-yl)glycerol 3-phosphate + L-serine = D-glyceraldehyde 3-phosphate + L-tryptophan + H2O. Its pathway is amino-acid biosynthesis; L-tryptophan biosynthesis; L-tryptophan from chorismate: step 5/5. Functionally, the alpha subunit is responsible for the aldol cleavage of indoleglycerol phosphate to indole and glyceraldehyde 3-phosphate. In Bacillus licheniformis (strain ATCC 14580 / DSM 13 / JCM 2505 / CCUG 7422 / NBRC 12200 / NCIMB 9375 / NCTC 10341 / NRRL NRS-1264 / Gibson 46), this protein is Tryptophan synthase alpha chain.